The primary structure comprises 619 residues: ATP-dependent zinc metalloprotease FtsH (619 aa).

At 1–11 (MSNTDPQPPQK) the chain is on the cytoplasmic side. Residues 12 to 32 (LPLNWVVWTLAVALMLYYLPA) traverse the membrane as a helical segment. Topologically, residues 33 to 120 (MRDRPEPAIK…EVKEGHDASS (88 aa)) are periplasmic. A helical transmembrane segment spans residues 121–141 (SKVILLSYLPWIMFMIILFWL). Over 142–619 (SRRTFRNFSG…IDECLQTGAS (478 aa)) the chain is Cytoplasmic. Residue 216 to 223 (GPPGTGKT) coordinates ATP. Zn(2+) is bound at residue His437. Glu438 is a catalytic residue. Zn(2+) is bound by residues His441 and Asp513.

This sequence in the central section; belongs to the AAA ATPase family. In the C-terminal section; belongs to the peptidase M41 family. In terms of assembly, homohexamer. Zn(2+) serves as cofactor.

Its subcellular location is the cell inner membrane. Its function is as follows. Acts as a processive, ATP-dependent zinc metallopeptidase for both cytoplasmic and membrane proteins. Plays a role in the quality control of integral membrane proteins. The polypeptide is ATP-dependent zinc metalloprotease FtsH (Hahella chejuensis (strain KCTC 2396)).